Consider the following 466-residue polypeptide: 3-isopropylmalate dehydratase large subunit (466 aa).

[4Fe-4S] cluster is bound by residues C347, C408, and C411.

It belongs to the aconitase/IPM isomerase family. LeuC type 1 subfamily. As to quaternary structure, heterodimer of LeuC and LeuD. It depends on [4Fe-4S] cluster as a cofactor.

The enzyme catalyses (2R,3S)-3-isopropylmalate = (2S)-2-isopropylmalate. It functions in the pathway amino-acid biosynthesis; L-leucine biosynthesis; L-leucine from 3-methyl-2-oxobutanoate: step 2/4. In terms of biological role, catalyzes the isomerization between 2-isopropylmalate and 3-isopropylmalate, via the formation of 2-isopropylmaleate. The protein is 3-isopropylmalate dehydratase large subunit of Herminiimonas arsenicoxydans.